Reading from the N-terminus, the 162-residue chain is Ecotin (162 aa).

A signal peptide spans 1–18 (MFVPAVVFAALASTSAWA). Residues cysteine 70 and cysteine 107 are joined by a disulfide bond.

The protein belongs to the protease inhibitor I11 (ecotin) family. As to quaternary structure, homodimer.

It is found in the periplasm. Functionally, general inhibitor of pancreatic serine proteases: inhibits chymotrypsin, trypsin, elastases, factor X, kallikrein as well as a variety of other proteases. This is Ecotin from Salmonella choleraesuis (strain SC-B67).